Consider the following 123-residue polypeptide: Small ribosomal subunit protein uS12 (123 aa).

The segment at arginine 9–proline 28 is disordered. Over residues lysine 18–alanine 27 the composition is skewed to low complexity. At aspartate 89 the chain carries 3-methylthioaspartic acid.

It belongs to the universal ribosomal protein uS12 family. As to quaternary structure, part of the 30S ribosomal subunit. Contacts proteins S8 and S17. May interact with IF1 in the 30S initiation complex.

Functionally, with S4 and S5 plays an important role in translational accuracy. Its function is as follows. Interacts with and stabilizes bases of the 16S rRNA that are involved in tRNA selection in the A site and with the mRNA backbone. Located at the interface of the 30S and 50S subunits, it traverses the body of the 30S subunit contacting proteins on the other side and probably holding the rRNA structure together. The combined cluster of proteins S8, S12 and S17 appears to hold together the shoulder and platform of the 30S subunit. The protein is Small ribosomal subunit protein uS12 of Desulfosudis oleivorans (strain DSM 6200 / JCM 39069 / Hxd3) (Desulfococcus oleovorans).